The chain runs to 203 residues: MTTEEKEILAAKLEEQKIDLDKPEVEDDDDNEDDDSDDDDKDDDEADGLDGEAGGKSKQSRSEKKSRKAMLKLGMKPITGVSRVTVKKSKNILFVISKPDVFKSPASDTYVIFGEAKIEDLSSQIQSQAAEQFKAPDLSNVISKGESSSAAVVQDDEEVDEEGVEPKDIELVMTQAGVSRPNAVKALKAADGDIVSAIMELTT.

The segment covering 1–23 (MTTEEKEILAAKLEEQKIDLDKP) has biased composition (basic and acidic residues). Residues 1–71 (MTTEEKEILA…SEKKSRKAML (71 aa)) are disordered. Acidic residues predominate over residues 24 to 50 (EVEDDDDNEDDDSDDDDKDDDEADGLD). S36 bears the Phosphoserine mark. Residues 60–125 (SRSEKKSRKA…AKIEDLSSQI (66 aa)) enclose the NAC-A/B domain. The region spanning 158-203 (EVDEEGVEPKDIELVMTQAGVSRPNAVKALKAADGDIVSAIMELTT) is the UBA domain.

It belongs to the NAC-alpha family.

Functionally, may promote appropriate targeting of ribosome-nascent polypeptide complexes. The sequence is that of Nascent polypeptide-associated complex subunit alpha-like protein 1 from Arabidopsis thaliana (Mouse-ear cress).